A 154-amino-acid polypeptide reads, in one-letter code: NADPH-dependent 7-cyano-7-deazaguanine reductase (154 aa).

The Thioimide intermediate role is filled by Cys-52. The Proton donor role is filled by Asp-59. Substrate-binding positions include 74–76 (VES) and 93–94 (HE).

Belongs to the GTP cyclohydrolase I family. QueF type 1 subfamily.

It localises to the cytoplasm. It carries out the reaction 7-aminomethyl-7-carbaguanine + 2 NADP(+) = 7-cyano-7-deazaguanine + 2 NADPH + 3 H(+). Its pathway is tRNA modification; tRNA-queuosine biosynthesis. Functionally, catalyzes the NADPH-dependent reduction of 7-cyano-7-deazaguanine (preQ0) to 7-aminomethyl-7-deazaguanine (preQ1). The sequence is that of NADPH-dependent 7-cyano-7-deazaguanine reductase from Sinorhizobium medicae (strain WSM419) (Ensifer medicae).